The following is a 271-amino-acid chain: MSGNVQLLNDTLAAAKSEGRAALIAYLPAGFPTVTGGIEAVKAALDGGADVVEVGLPHSDPVLDGPVIQTADDIALRGGVRIADVMRTVREAHEATGKPILVMTYWNPIDRYGVERFTAELAEAGGAGCILPDLPVQESALWREHADKHGLATVFVVAPSSRDARLAEITAVGSGFVYAASLMGVTGTRASVGAQAEDLVRRTRATTDTPVCVGLGVSNAAQAAEVAGFADGVIVGSAFVKRMLDAPDDAAGLEGVRALAADLAKGVRGQA.

Catalysis depends on proton acceptor residues glutamate 53 and aspartate 64.

It belongs to the TrpA family. In terms of assembly, tetramer of two alpha and two beta chains.

The catalysed reaction is (1S,2R)-1-C-(indol-3-yl)glycerol 3-phosphate + L-serine = D-glyceraldehyde 3-phosphate + L-tryptophan + H2O. It participates in amino-acid biosynthesis; L-tryptophan biosynthesis; L-tryptophan from chorismate: step 5/5. Its function is as follows. The alpha subunit is responsible for the aldol cleavage of indoleglycerol phosphate to indole and glyceraldehyde 3-phosphate. The chain is Tryptophan synthase alpha chain from Streptomyces coelicolor (strain ATCC BAA-471 / A3(2) / M145).